Consider the following 412-residue polypeptide: L-cysteine:1D-myo-inositol 2-amino-2-deoxy-alpha-D-glucopyranoside ligase (412 aa).

Residue cysteine 45 participates in Zn(2+) binding. L-cysteinyl-5'-AMP-binding positions include 45–48 (CGIT), threonine 60, and 83–85 (NIT). The 'HIGH' region signature appears at 47–57 (ITPYDAAHLGH). The short motif at 185-190 (ERGGDP) is the 'ERGGDP' region element. Tryptophan 225 is a binding site for L-cysteinyl-5'-AMP. Residue cysteine 229 coordinates Zn(2+). L-cysteinyl-5'-AMP is bound at residue 247–249 (GDD). Histidine 254 is a Zn(2+) binding site. An L-cysteinyl-5'-AMP-binding site is contributed by valine 281. The 'KMSKS' region signature appears at 287 to 291 (KMSKS).

It belongs to the class-I aminoacyl-tRNA synthetase family. MshC subfamily. In terms of assembly, monomer. Zn(2+) is required as a cofactor.

It carries out the reaction 1D-myo-inositol 2-amino-2-deoxy-alpha-D-glucopyranoside + L-cysteine + ATP = 1D-myo-inositol 2-(L-cysteinylamino)-2-deoxy-alpha-D-glucopyranoside + AMP + diphosphate + H(+). Catalyzes the ATP-dependent condensation of GlcN-Ins and L-cysteine to form L-Cys-GlcN-Ins. The polypeptide is L-cysteine:1D-myo-inositol 2-amino-2-deoxy-alpha-D-glucopyranoside ligase (Thermobifida fusca (strain YX)).